We begin with the raw amino-acid sequence, 444 residues long: Aspartate--tRNA(Asp/Asn) ligase (444 aa).

Glu176 contributes to the L-aspartate binding site. The segment at 198–201 (QLFK) is aspartate. Arg220 is an L-aspartate binding site. Residues 220 to 222 (RAE), 228 to 230 (RHL), and Glu367 contribute to the ATP site. Mg(2+) is bound by residues Glu367 and Ser370. 2 residues coordinate L-aspartate: Ser370 and Arg374. 415 to 418 (GCER) contributes to the ATP binding site.

This sequence belongs to the class-II aminoacyl-tRNA synthetase family. Type 2 subfamily. As to quaternary structure, homodimer. Mg(2+) is required as a cofactor.

Its subcellular location is the cytoplasm. The enzyme catalyses tRNA(Asx) + L-aspartate + ATP = L-aspartyl-tRNA(Asx) + AMP + diphosphate. Functionally, aspartyl-tRNA synthetase with relaxed tRNA specificity since it is able to aspartylate not only its cognate tRNA(Asp) but also tRNA(Asn). Reaction proceeds in two steps: L-aspartate is first activated by ATP to form Asp-AMP and then transferred to the acceptor end of tRNA(Asp/Asn). This is Aspartate--tRNA(Asp/Asn) ligase from Methanosarcina barkeri (strain Fusaro / DSM 804).